Reading from the N-terminus, the 246-residue chain is Ly6/PLAUR domain-containing protein 4 (246 aa).

The first 26 residues, methionine 1–alanine 26, serve as a signal peptide directing secretion. N-linked (GlcNAc...) asparagine glycosylation is present at asparagine 117. The region spanning cysteine 142–threonine 223 is the UPAR/Ly6 domain. Alanine 225 carries the GPI-anchor amidated alanine lipid modification. A propeptide spans glycine 226 to glycine 246 (removed in mature form).

The protein resides in the cell membrane. The polypeptide is Ly6/PLAUR domain-containing protein 4 (LYPD4) (Bos taurus (Bovine)).